Here is a 281-residue protein sequence, read N- to C-terminus: ATP synthase subunit a (281 aa).

The next 6 helical transmembrane spans lie at 50-70 (FSFT…LLLV), 116-136 (FFPC…QGMI), 145-165 (HFLI…IVGF), 172-192 (FLSF…LVLL), 219-239 (VKIL…FYFI), and 246-266 (FIVL…AYVF).

The protein belongs to the ATPase A chain family. As to quaternary structure, F-type ATPases have 2 components, CF(1) - the catalytic core - and CF(0) - the membrane proton channel. CF(1) has five subunits: alpha(3), beta(3), gamma(1), delta(1), epsilon(1). CF(0) has three main subunits: a, b and c.

Its subcellular location is the mitochondrion inner membrane. In terms of biological role, mitochondrial membrane ATP synthase (F(1)F(0) ATP synthase or Complex V) produces ATP from ADP in the presence of a proton gradient across the membrane which is generated by electron transport complexes of the respiratory chain. F-type ATPases consist of two structural domains, F(1) - containing the extramembraneous catalytic core and F(0) - containing the membrane proton channel, linked together by a central stalk and a peripheral stalk. During catalysis, ATP synthesis in the catalytic domain of F(1) is coupled via a rotary mechanism of the central stalk subunits to proton translocation. Key component of the proton channel; it may play a direct role in the translocation of protons across the membrane. This chain is ATP synthase subunit a (ATP6), found in Oenothera berteroana (Bertero's evening primrose).